The following is a 394-amino-acid chain: Elongation factor Tu 2 (394 aa).

In terms of domain architecture, tr-type G spans 10 to 204; the sequence is KPHVNVGTIG…ALDNYIPEPE (195 aa). The segment at 19–26 is G1; it reads GHVDHGKT. 19–26 provides a ligand contact to GTP; that stretch reads GHVDHGKT. Mg(2+) is bound at residue threonine 26. The G2 stretch occupies residues 60–64; that stretch reads GITIS. Residues 81-84 are G3; the sequence is DCPG. GTP contacts are provided by residues 81–85 and 136–139; these read DCPGH and NKCD. A G4 region spans residues 136 to 139; sequence NKCD. The tract at residues 174–176 is G5; the sequence is SAL.

This sequence belongs to the TRAFAC class translation factor GTPase superfamily. Classic translation factor GTPase family. EF-Tu/EF-1A subfamily. As to quaternary structure, monomer.

It localises to the cytoplasm. It catalyses the reaction GTP + H2O = GDP + phosphate + H(+). Functionally, GTP hydrolase that promotes the GTP-dependent binding of aminoacyl-tRNA to the A-site of ribosomes during protein biosynthesis. In Photobacterium profundum (strain SS9), this protein is Elongation factor Tu 2.